Reading from the N-terminus, the 911-residue chain is Golgin IMH1 (911 aa).

Disordered stretches follow at residues 16–41 (LAKG…SGLP) and 271–314 (KELP…ETVD). A coiled-coil region spans residues 101–280 (FFQDLNNKNN…KELPKAISHQ (180 aa)). Basic residues predominate over residues 286-299 (NRRKKNRNKGKKNK). Phosphoserine occurs at positions 308 and 660. 2 coiled-coil regions span residues 312-735 (TVDN…ALKH) and 766-814 (SKAD…KERQ). Residues 814–850 (QYSDKSGRVSRSGSIGTLANANIDSSPANNSNPTKLE) form a disordered region. A compositionally biased stretch (polar residues) spans 822-847 (VSRSGSIGTLANANIDSSPANNSNPT). Serine 827 is subject to Phosphoserine. Threonine 830 is modified (phosphothreonine). The GRIP domain maps to 861 to 909 (DSEKNEKIAYIKNVLLGFLEHKEQRNQLLPVISMLLQLDSTDEKRLVMS).

In terms of assembly, forms oligomers and is present in high-molecular-mass complexes. Interacts with ARL1.

It is found in the cytoplasm. It localises to the golgi apparatus membrane. Involved in vesicular transport between an endosomal compartment and the Golgi apparatus. This Saccharomyces cerevisiae (strain ATCC 204508 / S288c) (Baker's yeast) protein is Golgin IMH1 (IMH1).